Here is a 417-residue protein sequence, read N- to C-terminus: Putative F-box protein At3g58950 (417 aa).

The F-box domain occupies 1–53 (MDLFSSLPDEVLCHILSFLTTKEAALASVVSKRWRNQFALVPNLDIDEEGKRE).

The chain is Putative F-box protein At3g58950 from Arabidopsis thaliana (Mouse-ear cress).